The primary structure comprises 113 residues: Large ribosomal subunit protein uL22 (113 aa).

It belongs to the universal ribosomal protein uL22 family. As to quaternary structure, part of the 50S ribosomal subunit.

This protein binds specifically to 23S rRNA; its binding is stimulated by other ribosomal proteins, e.g. L4, L17, and L20. It is important during the early stages of 50S assembly. It makes multiple contacts with different domains of the 23S rRNA in the assembled 50S subunit and ribosome. Its function is as follows. The globular domain of the protein is located near the polypeptide exit tunnel on the outside of the subunit, while an extended beta-hairpin is found that lines the wall of the exit tunnel in the center of the 70S ribosome. This Bacillus pumilus (strain SAFR-032) protein is Large ribosomal subunit protein uL22.